The following is a 243-amino-acid chain: Ubiquinone/menaquinone biosynthesis C-methyltransferase UbiE (243 aa).

Residues T69, D90, and D116–A117 each bind S-adenosyl-L-methionine.

This sequence belongs to the class I-like SAM-binding methyltransferase superfamily. MenG/UbiE family.

The enzyme catalyses a 2-demethylmenaquinol + S-adenosyl-L-methionine = a menaquinol + S-adenosyl-L-homocysteine + H(+). It catalyses the reaction a 2-methoxy-6-(all-trans-polyprenyl)benzene-1,4-diol + S-adenosyl-L-methionine = a 5-methoxy-2-methyl-3-(all-trans-polyprenyl)benzene-1,4-diol + S-adenosyl-L-homocysteine + H(+). It participates in quinol/quinone metabolism; menaquinone biosynthesis; menaquinol from 1,4-dihydroxy-2-naphthoate: step 2/2. The protein operates within cofactor biosynthesis; ubiquinone biosynthesis. Functionally, methyltransferase required for the conversion of demethylmenaquinol (DMKH2) to menaquinol (MKH2) and the conversion of 2-polyprenyl-6-methoxy-1,4-benzoquinol (DDMQH2) to 2-polyprenyl-3-methyl-6-methoxy-1,4-benzoquinol (DMQH2). This is Ubiquinone/menaquinone biosynthesis C-methyltransferase UbiE from Burkholderia cenocepacia (strain ATCC BAA-245 / DSM 16553 / LMG 16656 / NCTC 13227 / J2315 / CF5610) (Burkholderia cepacia (strain J2315)).